The following is a 407-amino-acid chain: Negative RAS protein regulator protein (407 aa).

3 disordered regions span residues 51-94 (PRII…ARQI), 165-187 (HPSK…NLNF), and 241-273 (NNNN…NVFS). Residues 55–73 (SSSNSNSNSNSNSNSNSNS) show a composition bias toward low complexity. The Myb-like domain maps to 90–158 (SARQIRKKWK…QCHDRFKVLY (69 aa)). The segment covering 165–177 (HPSKKSKQKKKKS) has biased composition (basic residues). Residues 241–270 (NNNNNNINNSNNSNNNNSNNINRNSNHSTN) show a composition bias toward low complexity.

The protein localises to the nucleus. Functionally, negative regulator of the Ras-cyclic AMP pathway. Negatively regulate the activity of normal but not mutationally activated Ras proteins. The down-regulatory effect of RPI1 requires the presence of one of the two Ras GTPase activators, IRA1 and IRA2. This is Negative RAS protein regulator protein (RPI1) from Saccharomyces cerevisiae (strain ATCC 204508 / S288c) (Baker's yeast).